Here is a 453-residue protein sequence, read N- to C-terminus: Protein amnionless (453 aa).

Positions 1 to 19 (MGVLGRVLLWLQLCALTQA) are cleaved as a signal peptide. At 20–357 (VSKLWVPNTD…ESGAHVWGSS (338 aa)) the chain is on the extracellular side. Residue N35 is glycosylated (N-linked (GlcNAc...) asparagine). Disulfide bonds link C43-C96, C137-C213, C205-C211, C223-C249, C234-C250, and C239-C253. Residues 67 to 87 (SDMLLPLDGELVLASGAGFGV) are interaction with CUBN. In terms of domain architecture, VWFC spans 202–254 (PEDCADPSGCVCGNAEAQPWICAALLQPLGGRCPQAACHSALRPQGQCCDLCG). Residues 358–378 (AAGLAGGVAAAVLLALLVLLV) traverse the membrane as a helical segment. Residues 379-453 (APPLLRRAGR…PLFAGAEAEA (75 aa)) are Cytoplasmic-facing.

Interacts (via extracellular region) with CUBN/cubilin, giving rise to a huge complex containing one AMN chain and three CUBN chains. N-glycosylated. In terms of processing, a soluble form arises by proteolytic removal of the membrane anchor. Detected in proximal tubules in the kidney cortex (at protein level). Long isoforms are highly expressed in small intestine, colon and kidney (renal proximal tubule epithelial cells). Shorter isoforms are detected at lower levels in testis, thymus and peripheral blood leukocytes.

It is found in the apical cell membrane. It localises to the cell membrane. The protein localises to the endosome membrane. The protein resides in the membrane. Its subcellular location is the coated pit. It is found in the secreted. Functionally, membrane-bound component of the endocytic receptor formed by AMN and CUBN. Required for normal CUBN glycosylation and trafficking to the cell surface. The complex formed by AMN and CUBN is required for efficient absorption of vitamin B12. Required for normal CUBN-mediated protein transport in the kidney. This Homo sapiens (Human) protein is Protein amnionless (AMN).